The following is a 76-amino-acid chain: MCMMSHNKAFFLSLQHAAVSGVAVCLSVRRGAGSVPAGNRGKKTIITEYRITGTRALARCPTKPVTSMWNSSWTSR.

This is an uncharacterized protein from Human cytomegalovirus (strain AD169) (HHV-5).